The primary structure comprises 270 residues: uncharacterized protein (270 aa).

Possibly involved in pGI2 replication mechanism. This is an uncharacterized protein from Bacillus thuringiensis.